Here is a 235-residue protein sequence, read N- to C-terminus: Octanoyltransferase LIP2, mitochondrial (235 aa).

A mitochondrion-targeting transit peptide spans 1-32; that stretch reads MRSPRTLEVWKLGTVNYLKSLKLQEKLVSERK. The BPL/LPL catalytic domain occupies 34–218; that stretch reads HQIPDTLLSL…CLAKAFSYDD (185 aa). Residues 79–86, 147–149, and 160–162 each bind substrate; these read RGGDITFH, AIG, and GLA. Cys178 functions as the Acyl-thioester intermediate in the catalytic mechanism.

The protein belongs to the LipB family. In terms of tissue distribution, expressed in leaves. Expressed in roots, rosette leaves, cauline leaves, stems and siliques.

The protein localises to the mitochondrion. The enzyme catalyses octanoyl-[ACP] + L-lysyl-[protein] = N(6)-octanoyl-L-lysyl-[protein] + holo-[ACP] + H(+). Its pathway is protein modification; protein lipoylation via endogenous pathway; protein N(6)-(lipoyl)lysine from octanoyl-[acyl-carrier-protein]: step 1/2. Its function is as follows. Catalyzes the transfer of endogenously produced octanoic acid from octanoyl-acyl-carrier-protein onto the lipoyl domains of lipoate-dependent enzymes. Lipoyl-ACP can also act as a substrate although octanoyl-ACP is likely to be the physiological substrate. Together with LIP1 is essential for mitochondrial protein lipoylation during seed development. Required for the lipoylation of mitochondrial 2-oxoglutarate dehydrogenase component E2 proteins in leaves and roots. This Arabidopsis thaliana (Mouse-ear cress) protein is Octanoyltransferase LIP2, mitochondrial.